Here is a 504-residue protein sequence, read N- to C-terminus: ATP synthase subunit alpha (504 aa).

169–176 (GDRQTGKT) is an ATP binding site.

Belongs to the ATPase alpha/beta chains family. In terms of assembly, F-type ATPases have 2 components, CF(1) - the catalytic core - and CF(0) - the membrane proton channel. CF(1) has five subunits: alpha(3), beta(3), gamma(1), delta(1), epsilon(1). CF(0) has three main subunits: a(1), b(2) and c(9-12). The alpha and beta chains form an alternating ring which encloses part of the gamma chain. CF(1) is attached to CF(0) by a central stalk formed by the gamma and epsilon chains, while a peripheral stalk is formed by the delta and b chains.

The protein localises to the cell membrane. It carries out the reaction ATP + H2O + 4 H(+)(in) = ADP + phosphate + 5 H(+)(out). Produces ATP from ADP in the presence of a proton gradient across the membrane. The alpha chain is a regulatory subunit. The sequence is that of ATP synthase subunit alpha from Clostridium kluyveri (strain NBRC 12016).